Reading from the N-terminus, the 266-residue chain is Apolipoprotein A-I (266 aa).

A signal peptide spans 1 to 18 (MKAVVLTLAVLFLTGSQA). 2 tandem repeats follow at residues 67-88 (LKLL…EQLG) and 89-110 (PVTQ…QEMN). The tract at residues 67–266 (LKLLDNWDSL…EEASKKLNAQ (200 aa)) is 10 X approximate tandem repeats. At methionine 109 the chain carries Methionine sulfoxide. A 3; half-length repeat occupies 111–121 (KDVEEMKTKVQ). 5 repeat units span residues 122–143 (PYLD…QKVE), 144–165 (PLGS…EKLS), 166–187 (PLGE…TQLA), 188–209 (PYSE…ESGG), and 210–231 (ASLA…EKAK). The stretch at 232–242 (PALEDLRQGLL) is one 9; half-length repeat. Residues 243–266 (PVLESFKVSLLSALEEASKKLNAQ) form repeat 10.

The protein belongs to the apolipoprotein A1/A4/E family. As to quaternary structure, homodimer. Interacts with APOA1BP and CLU. Component of a sperm activating protein complex (SPAP), consisting of APOA1, an immunoglobulin heavy chain, an immunoglobulin light chain and albumin. Interacts with NDRG1. Interacts with SCGB3A2. Interacts with NAXE and YJEFN3. Post-translationally, glycosylated. In terms of processing, palmitoylated. Phosphorylation sites are present in the extracellular medium. As to expression, major protein of plasma HDL, also found in chylomicrons.

It is found in the secreted. Participates in the reverse transport of cholesterol from tissues to the liver for excretion by promoting cholesterol efflux from tissues and by acting as a cofactor for the lecithin cholesterol acyltransferase (LCAT). As part of the SPAP complex, activates spermatozoa motility. This is Apolipoprotein A-I (APOA1) from Carlito syrichta (Philippine tarsier).